The primary structure comprises 1024 residues: Zn(2)-C6 fungal-type transcription factor FTF1a (1024 aa).

Residues 137-164 constitute a DNA-binding region (zn(2)-C6 fungal-type); that stretch reads CIACRRKKVRCSGEKPACKHCLHSHIPC.

The protein resides in the nucleus. Its function is as follows. Zn(2)-C6 fungal-type transcription factor that has a role in the establishment of the fungus within the plant and/or the progress of the disease. Regulates the expression of virulence factors such as SIX1 and SIX6. This is Zn(2)-C6 fungal-type transcription factor FTF1a from Fusarium oxysporum f. sp. lycopersici (strain 4287 / CBS 123668 / FGSC 9935 / NRRL 34936) (Fusarium vascular wilt of tomato).